Here is a 162-residue protein sequence, read N- to C-terminus: Lymphocyte antigen 86 (162 aa).

The first 19 residues, 1 to 19, serve as a signal peptide directing secretion; sequence MNGVAAALLVWILTSPSSS. 3 disulfides stabilise this stretch: Cys-33-Cys-58, Cys-45-Cys-154, and Cys-102-Cys-112. N-linked (GlcNAc...) asparagine glycosylation is present at Asn-96. An N-linked (GlcNAc...) asparagine glycan is attached at Asn-156.

In terms of assembly, M-shaped tetramer of two CD180-LY86 heterodimers. Highly expressed in spleen, liver, brain and thymus, and at lower levels in kidney.

Its subcellular location is the secreted. It localises to the extracellular space. Its function is as follows. May cooperate with CD180 and TLR4 to mediate the innate immune response to bacterial lipopolysaccharide (LPS) and cytokine production. Important for efficient CD180 cell surface expression. This is Lymphocyte antigen 86 (Ly86) from Mus musculus (Mouse).